We begin with the raw amino-acid sequence, 849 residues long: Protein translocase subunit SecA (849 aa).

Residues Gln85, 103–107 (GEGKT), and Asp493 contribute to the ATP site. The Zn(2+) site is built by Cys832, Cys834, Cys843, and His844.

This sequence belongs to the SecA family. In terms of assembly, monomer and homodimer. Part of the essential Sec protein translocation apparatus which comprises SecA, SecYEG and auxiliary proteins SecDF. Other proteins may also be involved. Requires Zn(2+) as cofactor.

Its subcellular location is the cell membrane. The protein resides in the cytoplasm. The catalysed reaction is ATP + H2O + cellular proteinSide 1 = ADP + phosphate + cellular proteinSide 2.. In terms of biological role, part of the Sec protein translocase complex. Interacts with the SecYEG preprotein conducting channel. Has a central role in coupling the hydrolysis of ATP to the transfer of proteins into and across the cell membrane, serving as an ATP-driven molecular motor driving the stepwise translocation of polypeptide chains across the membrane. The sequence is that of Protein translocase subunit SecA from Streptococcus thermophilus (strain ATCC BAA-491 / LMD-9).